Consider the following 170-residue polypeptide: Ureidoglycolate lyase (170 aa).

It belongs to the ureidoglycolate lyase family. As to quaternary structure, homodimer. Ni(2+) is required as a cofactor.

It carries out the reaction (S)-ureidoglycolate = urea + glyoxylate. Its pathway is nitrogen metabolism; (S)-allantoin degradation. Catalyzes the catabolism of the allantoin degradation intermediate (S)-ureidoglycolate, generating urea and glyoxylate. Involved in the utilization of allantoin as nitrogen source. This chain is Ureidoglycolate lyase, found in Pseudomonas syringae pv. syringae (strain B728a).